A 474-amino-acid chain; its full sequence is Ribulose bisphosphate carboxylase/oxygenase activase, chloroplastic (474 aa).

The transit peptide at 1–58 directs the protein to the chloroplast; the sequence is MAAAVSTVGAINRAPLSLNGSGSGAVSAPASTFLGKKVVTVSRFAQSNKKSNGSFKVL. Threonine 78 is modified (phosphothreonine; by CK2). An ATP-binding site is contributed by 165-172; sequence GGKGQGKS. Phosphothreonine is present on threonine 283.

Belongs to the RuBisCO activase family. Post-translationally, phosphorylated at Thr-78 by CK2.

It is found in the plastid. The protein localises to the chloroplast stroma. The protein resides in the chloroplast. Its subcellular location is the plastoglobule. Its function is as follows. Activation of RuBisCO (ribulose-1,5-bisphosphate carboxylase/oxygenase; EC 4.1.1.39) involves the ATP-dependent carboxylation of the epsilon-amino group of lysine leading to a carbamate structure. The polypeptide is Ribulose bisphosphate carboxylase/oxygenase activase, chloroplastic (RCA) (Arabidopsis thaliana (Mouse-ear cress)).